A 3112-amino-acid polypeptide reads, in one-letter code: Genome polyprotein (3112 aa).

Residues 234–383 form the Peptidase S30 domain; sequence KLTQRRANKI…PDCLEGLTYY (150 aa). Active-site for P1 proteinase activity residues include H286, D301, and S333. The 122-residue stretch at 729-850 folds into the Peptidase C6 domain; it reads TLVPKSGFCY…IETFKDYRIG (122 aa). Catalysis depends on for helper component proteinase activity residues C737 and H809. The 152-residue stretch at 1278-1429 folds into the Helicase ATP-binding domain; that stretch reads NIATGAGNEF…CVPTNHKVDV (152 aa). 1291-1298 contacts ATP; that stretch reads GDVGSGKS. The DECH box motif lies at 1379–1382; the sequence is DECH. The 184-residue stretch at 1444–1627 folds into the Helicase C-terminal domain; it reads SIDSHAEGLR…EVNFVTREQV (184 aa). The Peptidase C4 domain occupies 2096-2311; sequence DDNYVPHSRC…ISWKGVPTNM (216 aa). Active-site for nuclear inclusion protein A activity residues include H2140, D2174, and C2243. Positions 2569-2687 constitute a RdRp catalytic domain; sequence WKFIDADGSR…NAPQGVCETI (119 aa). Positions 2818 to 2867 are disordered; that stretch reads HSGADQSGVVKDQTGDKAEGSGTKTEDPPNQTTDPVNNPSNGGNKDAPQN. A compositionally biased stretch (basic and acidic residues) spans 2830–2844; the sequence is QTGDKAEGSGTKTED. The segment covering 2845-2867 has biased composition (polar residues); sequence PPNQTTDPVNNPSNGGNKDAPQN.

The protein belongs to the potyviridae genome polyprotein family. Post-translationally, VPg is uridylylated by the polymerase and is covalently attached to the 5'-end of the genomic RNA. This uridylylated form acts as a nucleotide-peptide primer for the polymerase. Genome polyprotein of potyviruses undergoes post-translational proteolytic processing by the main proteinase NIa-pro resulting in the production of at least ten individual proteins. The P1 proteinase and the HC-pro cleave only their respective C-termini autocatalytically. 6K1 is essential for proper proteolytic separation of P3 from CI.

The protein resides in the host cytoplasmic vesicle. It is found in the virion. The catalysed reaction is RNA(n) + a ribonucleoside 5'-triphosphate = RNA(n+1) + diphosphate. The enzyme catalyses Hydrolyzes glutaminyl bonds, and activity is further restricted by preferences for the amino acids in P6 - P1' that vary with the species of potyvirus, e.g. Glu-Xaa-Xaa-Tyr-Xaa-Gln-|-(Ser or Gly) for the enzyme from tobacco etch virus. The natural substrate is the viral polyprotein, but other proteins and oligopeptides containing the appropriate consensus sequence are also cleaved.. It carries out the reaction Hydrolyzes a Gly-|-Gly bond at its own C-terminus, commonly in the sequence -Tyr-Xaa-Val-Gly-|-Gly, in the processing of the potyviral polyprotein.. Its function is as follows. Required for aphid transmission and also has proteolytic activity. Only cleaves a Gly-Gly dipeptide at its own C-terminus. Interacts with virions and aphid stylets. Acts as a suppressor of RNA-mediated gene silencing, also known as post-transcriptional gene silencing (PTGS), a mechanism of plant viral defense that limits the accumulation of viral RNAs. May have RNA-binding activity. Has helicase activity. It may be involved in replication. In terms of biological role, indispensable for virus replication. Functionally, mediates the cap-independent, EIF4E-dependent translation of viral genomic RNAs. Binds to the cap-binding site of host EIF4E and thus interferes with the host EIF4E-dependent mRNA export and translation. VPg-RNA directly binds EIF4E and is a template for transcription. Also forms trimeric complexes with EIF4E-EIF4G, which are templates for translation. Its function is as follows. Has RNA-binding and proteolytic activities. An RNA-dependent RNA polymerase that plays an essential role in the virus replication. In terms of biological role, involved in aphid transmission, cell-to-cell and systemis movement, encapsidation of the viral RNA and in the regulation of viral RNA amplification. The sequence is that of Genome polyprotein from Triticum aestivum (Wheat).